A 506-amino-acid chain; its full sequence is Probable alpha-L-arabinofuranosidase B (506 aa).

The signal sequence occupies residues 1-26; that stretch reads MSSGLSLERACAVALGIVASASLVAA. The segment at 27-343 is catalytic; that stretch reads GPCDIYSSGG…ADIVAAKYAI (317 aa). Intrachain disulfides connect Cys29-Cys39, Cys89-Cys94, and Cys184-Cys185. N-linked (GlcNAc...) asparagine glycosylation occurs at Asn91. Substrate is bound at residue Asp227. Glu229 functions as the Nucleophile in the catalytic mechanism. Residues Asn230 and Gly304 each contribute to the substrate site. Asp305 acts as the Proton donor in catalysis. The segment at 344 to 506 is ABD; that stretch reads ASLTSGPALT…VSWVVSTGFA (163 aa). Cys409 and Cys447 are disulfide-bonded. Substrate-binding residues include His424, Asn426, Phe427, Asp443, His471, Glu473, Leu476, and Asp496.

This sequence belongs to the glycosyl hydrolase 54 family.

It is found in the secreted. It catalyses the reaction Hydrolysis of terminal non-reducing alpha-L-arabinofuranoside residues in alpha-L-arabinosides.. The protein operates within glycan metabolism; L-arabinan degradation. Its function is as follows. Alpha-L-arabinofuranosidase involved in the degradation of arabinoxylan, a major component of plant hemicellulose. Able to hydrolyze 1,5-, 1,3- and 1,2-alpha-linkages not only in L-arabinofuranosyl oligosaccharides, but also in polysaccharides containing terminal non-reducing L-arabinofuranoses in side chains, like L-arabinan, arabinogalactan and arabinoxylan. This is Probable alpha-L-arabinofuranosidase B (abfB) from Aspergillus flavus (strain ATCC 200026 / FGSC A1120 / IAM 13836 / NRRL 3357 / JCM 12722 / SRRC 167).